Consider the following 265-residue polypeptide: Undecaprenyl-diphosphatase (265 aa).

7 consecutive transmembrane segments (helical) span residues 42 to 62 (EAIP…IVYF), 90 to 110 (ISFL…LLLF), 115 to 135 (VEIS…VTGI), 160 to 182 (VAQG…ALLL), 195 to 215 (FLMS…MGMV), 222 to 242 (IVGL…FLKV), and 245 to 265 (KVDF…TMFL).

It belongs to the UppP family.

The protein localises to the cell membrane. The catalysed reaction is di-trans,octa-cis-undecaprenyl diphosphate + H2O = di-trans,octa-cis-undecaprenyl phosphate + phosphate + H(+). In terms of biological role, catalyzes the dephosphorylation of undecaprenyl diphosphate (UPP). The chain is Undecaprenyl-diphosphatase from Methanococcoides burtonii (strain DSM 6242 / NBRC 107633 / OCM 468 / ACE-M).